The primary structure comprises 591 residues: Metalloendopeptidase OPG085 (591 aa).

Histidine 41 serves as a coordination point for Zn(2+). Glutamate 44 is an active-site residue. Residues histidine 45 and glutamate 112 each coordinate Zn(2+).

It belongs to the peptidase M44 family. It depends on Zn(2+) as a cofactor. Undergoes proteolytic processing during the course of infection. May be cleaved into 46 kDa and 22 kDa products (Potential).

Its subcellular location is the virion. Probably involved in maturation of some viral proteins by processing them preferentially at Ala-Gly-|-Ser/Thr/Lys motifs. Does not seem to be responsible for the cleavage of major core proteins. The protein is Metalloendopeptidase OPG085 (OPG085) of Homo sapiens (Human).